The following is a 1960-amino-acid chain: MTKVPQGFDFSFLNEEEARKILQVLERNEELRRAEKDRISKLQKTKRDIRWLQGATGEWFEEIQRKKFCNETDVNQMLKPPLTYRLQKGMAKNDPMELQTPRSKSLINQKPSVSSRMSFRSSFASLFSFRRPAKETLKLQSPRPNRCDERVRPSASVRGTASAKIYNSPVGNQPVASVFVPKPAIMREESGMPPPWDASLLESEFFQVLDDLDNKLAQEQSSGLMNTRVPFNYGSRTQFKLSHRNSHGHSTGRQQNYHSETSNMSIYNILRPGTPREGFKTFSPRTKTIYDMYRTREPRVLKEDFMQKNAFGSASLCFDSRQRSASPATGSFTARSLHFPADTQNKSSFTPVRHQQSPKRTPLSSIIWNRSDASRHRQNQEESLGVQAPMDIDPEEQYVSPRCFQESRRYEMCHSQNAYQSYPLNVPVANAMSPDTLENSENMPFYRQSNPFARSFFSSTFRQSREQRFGQNSFWSRQEEYSSWSDFPQSRGPFPSSDKDFEMFSVEANRAPSVCSQGVPSQHWRSHSSGHGTYVFRGREDSHCWRSDFQTSPLESMDTSHVNENQHPPHFVTPVGFSITDSSCHLQSSRLDSQQGYFPVEEAVDEDPYLCGKAQTPASSFRTPFPLSPDDGRESQSSSFPDSTATLQKIIPNKPDFLPIRNCTEVPVACSHSTDSLSLTDTQPNIPVTETNSEKDMDVSVSKDEQLNKTGQKSRPTGLPQYVLHTVISNDLPDFQNAHSRDSAQNDRYGFNAPATERSRRSPRVFSRKGTSQIHTTQRDQSNKLSKNKCFGGDRTLDSAASPPFIQESGTATSLPSPNQGCHQKTGSNEESSNTIKNSHWCFESTANQKSQPSREPALLDLEQSLSTHSTNDSKLAPGHSISRAPLHVASDAPQESFLDARLVPSTTVFSRSLSDQDPGQEQREEKDKATKSQDNQLAVNSTDNQESHDSPALPHDAVHCHPYSPFKNGRGKGRVRRRVSCIEKLTKTERAAAPTREGSGCAEDQRSIKDPELSTVYCTLPRKPASFLIHSRQQESKGTVASVRNGPLPFQIKNKAEVPTGKSTSDKPSSPESVSDAANAVSGTPKATKKMTDMKAIRSASVRKGPLPFLIKRAISCPSGEPCSLAESDDRQKSSVLGMDASPVIPRPGGRIFNSLEGEPSFRESAFSEKELAQEHTGKDRELRAPRMGLFNPSKKTPERLCATGSGKESGRALHKFKTTSMFSVSGDEENVNCLEVVSIYYTLPRKPSKKFCSLLQQYTQGTDSLRDAFQGETEALPNALEIDELNCPAQVQSGIPPPQDPKMQVDSAPCCLSHSPESKDVSQLPDRETSKSTLEEMTSVGPDVSLHREEPTTKEISPSNVSKTAIDDSLSREKREKELLRQILRAPLLHQEKGAGKEHTKSHQQPSKGGNSGPSGLPSRSEDNDENSQTRRDSGTCAGGMASGNGQYPWRDHMAAVVGDRSSRSQPRETSGTTGSDCQNPTDKMLSDSESQAFALTPALCKLQLAEEAQPGGAGLQSEASQAGSQETNTAEMRKVEDEEHMLTRDQTLLPRGNNKNKTNTDETKDRYSGKHRLAAISKASKRIPAKDLSPRKHVATIFSQSESESGFRRLSLYRPEDNPLSPEPTVKATESTDESSQMNVDKSETLLQETTVSSPGPPGQPCHQKSASILQPHLNGSPGVLETPPKSEGSKTQISGELGAPAQLTLTSPLEKGAGHQQRLSPPFPLEPTQKSTINSHCQLRHRSAPSPESEPEPHLYRSKSLKNFNVQSDLLCASHPPKARGRHFSENTSIDNALSQLSLEDGSFPNSGYNRRFKSSSELPASYESESWTSYSNRTRGPKSTSSISRPIDYGIFGKEQQLAFLENVKRSLTQGRLWKPSFLKNPGFLKDDVLNASNLSQSELVNSPAGQAPEDGVFPSEPLNIYKDDPVEPLVSDWDTDTTTDDEYYLDEKDKESEL.

Residues 7-63 (GFDFSFLNEEEARKILQVLERNEELRRAEKDRISKLQKTKRDIRWLQGATGEWFEEI) form the RabBD domain. Polar residues-rich tracts occupy residues 325-334 (ASPATGSFTA), 342-366 (DTQNKSSFTPVRHQQSPKRTPLSSI), and 635-645 (SQSSSFPDSTA). Disordered stretches follow at residues 325–366 (ASPA…LSSI), 616–645 (TPASSFRTPFPLSPDDGRESQSSSFPDSTA), 672–720 (HSTD…TGLP), 734–835 (DFQN…SSNT), and 910–976 (FSRS…KGRV). The span at 673-682 (STDSLSLTDT) shows a compositional bias: low complexity. The span at 692–707 (NSEKDMDVSVSKDEQL) shows a compositional bias: basic and acidic residues. Phosphoserine is present on residues Ser799 and Ser802. Polar residues-rich tracts occupy residues 808–835 (ESGTATSLPSPNQGCHQKTGSNEESSNT) and 910–920 (FSRSLSDQDPG). The span at 921–932 (QEQREEKDKATK) shows a compositional bias: basic and acidic residues. Residues 933–945 (SQDNQLAVNSTDN) are compositionally biased toward polar residues. At Ser1027 the chain carries Phosphoserine. Residues 1035–1095 (QESKGTVASV…PKATKKMTDM (61 aa)) form a disordered region. Polar residues predominate over residues 1062–1074 (GKSTSDKPSSPES). 2 positions are modified to phosphoserine: Ser1083 and Ser1117. Disordered stretches follow at residues 1291–1375 (AQVQ…LSRE), 1389–1493 (PLLH…DSES), and 1510–1759 (EAQP…EPHL). A compositionally biased stretch (basic and acidic residues) spans 1318–1336 (PESKDVSQLPDRETSKSTL). The segment covering 1356 to 1365 (KEISPSNVSK) has biased composition (polar residues). Basic and acidic residues predominate over residues 1392–1403 (HQEKGAGKEHTK). 2 stretches are compositionally biased toward polar residues: residues 1470–1493 (RETSGTTGSDCQNPTDKMLSDSES) and 1520–1533 (SEASQAGSQETNTA). Ser1493 carries the post-translational modification Phosphoserine. Basic and acidic residues-rich tracts occupy residues 1534–1546 (EMRKVEDEEHMLT) and 1561–1571 (TNTDETKDRYS). Residues 1572–1586 (GKHRLAAISKASKRI) show a composition bias toward basic residues. A compositionally biased stretch (polar residues) spans 1637–1657 (ESSQMNVDKSETLLQETTVSS). Ser1724, Ser1739, Ser1789, and Ser1819 each carry phosphoserine. Polar residues predominate over residues 1732–1741 (TQKSTINSHC). Disordered stretches follow at residues 1828 to 1847 (ESESWTSYSNRTRGPKSTSS) and 1906 to 1960 (VNSP…ESEL). Over residues 1939-1950 (WDTDTTTDDEYY) the composition is skewed to acidic residues. Residues 1951-1960 (LDEKDKESEL) are compositionally biased toward basic and acidic residues.

Interacts with RAB27A.

In terms of biological role, may act as Rab effector protein and play a role in vesicle trafficking. This chain is Exophilin-5, found in Mus musculus (Mouse).